The following is a 413-amino-acid chain: SWIRM domain-containing protein FUN19 (413 aa).

A compositionally biased stretch (low complexity) spans K35–S51. Disordered regions lie at residues K35 to N55, Y189 to S211, and Y249 to S271. T194 bears the Phosphothreonine mark. Positions S200 to S211 are enriched in low complexity. A phosphoserine mark is found at S207 and S211. Residues L316–L413 form the SWIRM domain.

This is SWIRM domain-containing protein FUN19 (FUN19) from Saccharomyces cerevisiae (strain ATCC 204508 / S288c) (Baker's yeast).